A 240-amino-acid polypeptide reads, in one-letter code: Uridylate cyclase (240 aa).

The Guanylate cyclase domain occupies 45–180 (TYLYADMANS…RAPNLAAKLS (136 aa)). Tyr-48 is a binding site for a ribonucleoside 5'-triphosphate. Positions 50 and 94 each coordinate Mn(2+). Arg-95 is an a ribonucleoside 5'-triphosphate binding site.

The protein belongs to the adenylyl cyclase class-4/guanylyl cyclase family. Pyrimidine cyclase subfamily. In terms of assembly, homodimer. Requires Mn(2+) as cofactor.

The protein localises to the cytoplasm. The enzyme catalyses UTP = 3',5'-cyclic UMP + diphosphate. In terms of biological role, pycsar (pyrimidine cyclase system for antiphage resistance) provides immunity against bacteriophage. The pyrimidine cyclase (PycC) synthesizes cyclic nucleotides in response to infection; these serve as specific second messenger signals. The signals activate the adjacent effector, leading to bacterial cell death and abortive phage infection. A clade B Pycsar system. Its function is as follows. The pyrimidine cyclase gene of a two-gene Pycsar system, weakly generates cyclic UMP (cUMP) from UTP, has little to no activity on ATP, CTP or GTP. Expression of this and adjacent effector RsmPycTM (AC A0A1V0HUU2) probably confers resistance to bacteriophage. The genes are probably only expressed in response to bacteriophage infection. This Rhodovulum sp. (strain MB263) protein is Uridylate cyclase.